A 469-amino-acid polypeptide reads, in one-letter code: Phenylalanine--tRNA ligase, mitochondrial (469 aa).

A mitochondrion-targeting transit peptide spans 1-17 (MFLNRMMKTRTGLYRLY). Residues 126-129 (SAHE), R155, 162-164 (THY), 169-171 (QME), E302, and F329 contribute to the substrate site. In terms of domain architecture, FDX-ACB spans 372–469 (SKHPGSFRDV…LVKEYSVELR (98 aa)).

Belongs to the class-II aminoacyl-tRNA synthetase family. In terms of assembly, monomer.

It localises to the mitochondrion matrix. The enzyme catalyses tRNA(Phe) + L-phenylalanine + ATP = L-phenylalanyl-tRNA(Phe) + AMP + diphosphate + H(+). Its function is as follows. Is responsible for the charging of tRNA(Phe) with phenylalanine in mitochondrial translation. The polypeptide is Phenylalanine--tRNA ligase, mitochondrial (MSF1) (Saccharomyces cerevisiae (strain ATCC 204508 / S288c) (Baker's yeast)).